A 215-amino-acid chain; its full sequence is Oligoribonuclease (215 aa).

One can recognise an Exonuclease domain in the interval 5–170 (LVWIDCEMTG…ADIHESIREL (166 aa)). Residue Y127 is part of the active site. Residues 196–215 (LSDGAGAQEETDSAEAPQSG) are disordered.

The protein belongs to the oligoribonuclease family.

Its subcellular location is the cytoplasm. In terms of biological role, 3'-to-5' exoribonuclease specific for small oligoribonucleotides. In Mycobacterium bovis (strain BCG / Pasteur 1173P2), this protein is Oligoribonuclease.